A 207-amino-acid polypeptide reads, in one-letter code: dTTP/UTP pyrophosphatase (207 aa).

Aspartate 86 functions as the Proton acceptor in the catalytic mechanism.

The protein belongs to the Maf family. YhdE subfamily. A divalent metal cation is required as a cofactor.

It localises to the cytoplasm. It catalyses the reaction dTTP + H2O = dTMP + diphosphate + H(+). The catalysed reaction is UTP + H2O = UMP + diphosphate + H(+). Functionally, nucleoside triphosphate pyrophosphatase that hydrolyzes dTTP and UTP. May have a dual role in cell division arrest and in preventing the incorporation of modified nucleotides into cellular nucleic acids. In Nitrosospira multiformis (strain ATCC 25196 / NCIMB 11849 / C 71), this protein is dTTP/UTP pyrophosphatase.